The sequence spans 130 residues: Small ribosomal subunit protein uS8 (130 aa).

The protein belongs to the universal ribosomal protein uS8 family. Part of the 30S ribosomal subunit. Contacts proteins S5 and S12.

Its function is as follows. One of the primary rRNA binding proteins, it binds directly to 16S rRNA central domain where it helps coordinate assembly of the platform of the 30S subunit. This is Small ribosomal subunit protein uS8 from Idiomarina loihiensis (strain ATCC BAA-735 / DSM 15497 / L2-TR).